A 117-amino-acid chain; its full sequence is Large ribosomal subunit protein bL19 (117 aa).

It belongs to the bacterial ribosomal protein bL19 family.

Functionally, this protein is located at the 30S-50S ribosomal subunit interface and may play a role in the structure and function of the aminoacyl-tRNA binding site. This is Large ribosomal subunit protein bL19 from Shewanella baltica (strain OS155 / ATCC BAA-1091).